The primary structure comprises 117 residues: DNA-binding protein RdgB (117 aa).

The H-T-H motif DNA-binding region spans 82-102; that stretch reads NHSALAKKYNVSLQWIYKIVR.

The protein belongs to the c/mor transcriptional regulatory family.

Functionally, regulates pectin lyase production in response to DNA damage. The sequence is that of DNA-binding protein RdgB (rdgB) from Pectobacterium carotovorum subsp. carotovorum (Erwinia carotovora subsp. carotovora).